Here is a 447-residue protein sequence, read N- to C-terminus: Membrane metalloprotease ARASP, chloroplastic (447 aa).

A chloroplast-targeting transit peptide spans 1 to 73 (MLLNISSSPI…YPDGERFDFR (73 aa)). Position 102 (histidine 102) interacts with Zn(2+). Glutamate 103 is a catalytic residue. Position 106 (histidine 106) interacts with Zn(2+). Residues 177-197 (SIVVSAGIIANVIFAYAIIFV) form a helical membrane-spanning segment. Residues 202–244 (VGLPVQEAFPGVLVPEVKTFSAASRDGLLSGDVILAVDGTELS) form the PDZ domain. A run of 2 helical transmembrane segments spans residues 379–399 (LAVINLLPLPALDGGTLALIL) and 413–433 (VEQGIMSSGIMLVIFLGLFLI).

The protein belongs to the peptidase M50A family. Requires Zn(2+) as cofactor. As to expression, expressed in green seedlings and cotyledons. Low levels of expression in roots, siliques and seeds.

The protein resides in the plastid. It localises to the chloroplast inner membrane. In terms of biological role, metalloprotease essential for chloroplast and plant development. May be involved in regulated intramembrane proteolysis (RIP). The polypeptide is Membrane metalloprotease ARASP, chloroplastic (Arabidopsis thaliana (Mouse-ear cress)).